The chain runs to 423 residues: WD repeat and SOCS box-containing protein 1 (423 aa).

The disordered stretch occupies residues 76-100; it reads DRSSGAGPRRLSRQNSEGSLLPGEP. WD repeat units lie at residues 125 to 166, 169 to 209, 213 to 252, 255 to 294, and 310 to 347; these read SRCV…LLLN, DHTD…NMVK, GHQNWVYCSAFSPDSSVLCSVGAGKAVFLWDMDKYTLIRK, GHHNDVVCCEFSPDGALLATASYDTRVIVWDPHTATVLLE, and ANDRWVRSVAFCHDGRHIASVTDDRLVRFWSIDEKSPQ. Positions 373 to 423 constitute an SOCS box domain; the sequence is DGSVHFWASPRSIASLQHLCRMTLRRVMPTQQVYTLPIPFSMQDYLAYKTL.

In terms of assembly, component of a probable ECS E3 ubiquitin-protein ligase complex that contains the Elongin BC complex.

The protein operates within protein modification; protein ubiquitination. Probable substrate-recognition component of a SCF-like ECS (Elongin-Cullin-SOCS-box protein) E3 ubiquitin-protein ligase complex which mediates the ubiquitination and subsequent proteasomal degradation of target proteins. The protein is WD repeat and SOCS box-containing protein 1 (wsb1) of Danio rerio (Zebrafish).